A 306-amino-acid chain; its full sequence is Non-specific ribonucleoside hydrolase RihC (306 aa).

The active site involves histidine 235.

The protein belongs to the IUNH family. RihC subfamily.

In terms of biological role, hydrolyzes both purine and pyrimidine ribonucleosides with a broad-substrate specificity. This chain is Non-specific ribonucleoside hydrolase RihC, found in Salmonella schwarzengrund (strain CVM19633).